The primary structure comprises 446 residues: Nuclear distribution protein nudF (446 aa).

The region spanning 9–41 (QAEELHKSMVAYLSSIKASQSSNTLREELGIGD) is the LisH domain. The stretch at 60 to 86 (TGIARLQRKILDLESKITSLQAELDSV) forms a coiled coil. WD repeat units lie at residues 113 to 154 (SHRD…RTLK), 156 to 196 (HMRG…ANIR), 200 to 240 (GHDH…CVRT), 243 to 282 (SNSIWFLDVSPSFDGKWLVAGGRDQAVTVWEVSSAEPRAA), 285 to 345 (GHDN…IKTL), 347 to 386 (GHDNWIRGLVFHPSGKYLFSVSDDKTIRCWDLSQEGRLVK), 391 to 430 (AHGHFISCIRWAPPPRNAAAEASETTNGVSKKAPTKPAFQ), and 432 to 446 (VIATGSADSCVRVFK).

Belongs to the WD repeat LIS1/nudF family. As to quaternary structure, self-associates. Interacts with nudE and dynein.

Its subcellular location is the cytoplasm. The protein localises to the cytoskeleton. It localises to the spindle pole. Its function is as follows. Positively regulates the activity of the minus-end directed microtubule motor protein dynein. May enhance dynein-mediated microtubule sliding by targeting dynein to the microtubule plus end. Required for nuclear migration during vegetative growth as well as development. Required for retrograde early endosome (EE) transport from the hyphal tip. Required for localization of dynein to the mitotic spindle poles. Recruits additional proteins to the dynein complex at SPBs. This is Nuclear distribution protein nudF from Aspergillus terreus (strain NIH 2624 / FGSC A1156).